Consider the following 274-residue polypeptide: Cytochrome c oxidase subunit 3 (274 aa).

The Mitochondrial matrix segment spans residues Met1–Pro15. The helical transmembrane segment at Trp16–Trp34 threads the bilayer. At Phe35–Ser40 the chain is on the mitochondrial intermembrane side. The helical transmembrane segment at Met41 to Thr66 threads the bilayer. Over Phe67 to Thr72 the chain is Mitochondrial matrix. Residues Ser73–Ser105 form a helical membrane-spanning segment. At Leu106–Glu128 the chain is on the mitochondrial intermembrane side. The helical transmembrane segment at Val129–Met152 threads the bilayer. The Mitochondrial matrix segment spans residues Glu153–Asn155. A helical membrane pass occupies residues Arg156–Glu183. At Thr184–Asp190 the chain is on the mitochondrial intermembrane side. The chain crosses the membrane as a helical span at residues Gly191–Leu223. At Ser224–His232 the chain is on the mitochondrial matrix side. A helical membrane pass occupies residues Phe233–Ile256. The Mitochondrial intermembrane portion of the chain corresponds to Tyr257–Asn274.

This sequence belongs to the cytochrome c oxidase subunit 3 family. In terms of assembly, component of the cytochrome c oxidase (complex IV, CIV), a multisubunit enzyme composed of 14 subunits. The complex is composed of a catalytic core of 3 subunits MT-CO1, MT-CO2 and MT-CO3, encoded in the mitochondrial DNA, and 11 supernumerary subunits COX4I, COX5A, COX5B, COX6A, COX6B, COX6C, COX7A, COX7B, COX7C, COX8 and NDUFA4, which are encoded in the nuclear genome. The complex exists as a monomer or a dimer and forms supercomplexes (SCs) in the inner mitochondrial membrane with NADH-ubiquinone oxidoreductase (complex I, CI) and ubiquinol-cytochrome c oxidoreductase (cytochrome b-c1 complex, complex III, CIII), resulting in different assemblies (supercomplex SCI(1)III(2)IV(1) and megacomplex MCI(2)III(2)IV(2)).

Its subcellular location is the mitochondrion inner membrane. It carries out the reaction 4 Fe(II)-[cytochrome c] + O2 + 8 H(+)(in) = 4 Fe(III)-[cytochrome c] + 2 H2O + 4 H(+)(out). In terms of biological role, component of the cytochrome c oxidase, the last enzyme in the mitochondrial electron transport chain which drives oxidative phosphorylation. The respiratory chain contains 3 multisubunit complexes succinate dehydrogenase (complex II, CII), ubiquinol-cytochrome c oxidoreductase (cytochrome b-c1 complex, complex III, CIII) and cytochrome c oxidase (complex IV, CIV), that cooperate to transfer electrons derived from NADH and succinate to molecular oxygen, creating an electrochemical gradient over the inner membrane that drives transmembrane transport and the ATP synthase. Cytochrome c oxidase is the component of the respiratory chain that catalyzes the reduction of oxygen to water. Electrons originating from reduced cytochrome c in the intermembrane space (IMS) are transferred via the dinuclear copper A center (CU(A)) of subunit 2 and heme A of subunit 1 to the active site in subunit 1, a binuclear center (BNC) formed by heme A3 and copper B (CU(B)). The BNC reduces molecular oxygen to 2 water molecules using 4 electrons from cytochrome c in the IMS and 4 protons from the mitochondrial matrix. This chain is Cytochrome c oxidase subunit 3 (MT-CO3), found in Lemur catta (Ring-tailed lemur).